Consider the following 700-residue polypeptide: Endoglucanase A (700 aa).

A signal peptide spans 1 to 33; that stretch reads MKTRQRKRLFVSAALAVSLTMTVPMPASVNAAA. Residue glutamate 213 is part of the active site. In terms of domain architecture, CBM3 spans 550-700; sequence NSDLVVQYKD…DGQLVWGIEP (151 aa).

It belongs to the glycosyl hydrolase 44 (cellulase J) family. In terms of processing, a short form (EG-A-S) arises from post-translational proteolysis of approximately 150 AA at the C-terminus of EG-A-L.

It carries out the reaction Endohydrolysis of (1-&gt;4)-beta-D-glucosidic linkages in cellulose, lichenin and cereal beta-D-glucans.. The polypeptide is Endoglucanase A (celA) (Paenibacillus lautus (Bacillus lautus)).